A 648-amino-acid polypeptide reads, in one-letter code: Indolepyruvate oxidoreductase subunit IorA (648 aa).

4Fe-4S ferredoxin-type domains are found at residues 585–614 (PIYQ…WDAE) and 616–645 (KKAR…KVRE). 8 residues coordinate [4Fe-4S] cluster: Cys594, Cys597, Cys600, Cys606, Cys625, Cys628, Cys631, and Cys635.

In terms of assembly, heterodimer of the IorA and IorB subunits. It depends on [4Fe-4S] cluster as a cofactor.

The catalysed reaction is indole-3-pyruvate + 2 oxidized [2Fe-2S]-[ferredoxin] + CoA = (indol-3-yl)acetyl-CoA + 2 reduced [2Fe-2S]-[ferredoxin] + CO2 + H(+). In terms of biological role, catalyzes the ferredoxin-dependent oxidative decarboxylation of arylpyruvates. In Pyrococcus horikoshii (strain ATCC 700860 / DSM 12428 / JCM 9974 / NBRC 100139 / OT-3), this protein is Indolepyruvate oxidoreductase subunit IorA (iorA).